A 310-amino-acid polypeptide reads, in one-letter code: 4-diphosphocytidyl-2-C-methyl-D-erythritol kinase (310 aa).

Lys12 is an active-site residue. 97–107 contacts ATP; that stretch reads PIGAGLAGGSS. Asp139 is a catalytic residue.

The protein belongs to the GHMP kinase family. IspE subfamily.

It carries out the reaction 4-CDP-2-C-methyl-D-erythritol + ATP = 4-CDP-2-C-methyl-D-erythritol 2-phosphate + ADP + H(+). The protein operates within isoprenoid biosynthesis; isopentenyl diphosphate biosynthesis via DXP pathway; isopentenyl diphosphate from 1-deoxy-D-xylulose 5-phosphate: step 3/6. Its function is as follows. Catalyzes the phosphorylation of the position 2 hydroxy group of 4-diphosphocytidyl-2C-methyl-D-erythritol. This Synechococcus sp. (strain CC9311) protein is 4-diphosphocytidyl-2-C-methyl-D-erythritol kinase.